The primary structure comprises 339 residues: Glyoxylate reductase (339 aa).

Residues 157 to 160 (LGRI) and 239 to 241 (TAR) each bind NADP(+). Residues arginine 241 and glutamate 270 contribute to the active site. Histidine 289 functions as the Proton donor in the catalytic mechanism. 289-291 (HIA) provides a ligand contact to NADP(+).

This sequence belongs to the D-isomer specific 2-hydroxyacid dehydrogenase family. GyaR subfamily. As to quaternary structure, homodimer.

The protein resides in the cytoplasm. The enzyme catalyses glycolate + NAD(+) = glyoxylate + NADH + H(+). This Thermofilum pendens (strain DSM 2475 / Hrk 5) protein is Glyoxylate reductase.